The sequence spans 251 residues: uncharacterized protein (251 aa).

The protein belongs to the methyltransferase superfamily.

Its subcellular location is the cytoplasm. It localises to the nucleus. Probable methyltransferase. This is an uncharacterized protein from Schizosaccharomyces pombe (strain 972 / ATCC 24843) (Fission yeast).